We begin with the raw amino-acid sequence, 349 residues long: Anthranilate phosphoribosyltransferase (349 aa).

5-phospho-alpha-D-ribose 1-diphosphate contacts are provided by residues glycine 84, 87 to 88, threonine 92, 94 to 97, 112 to 120, and serine 124; these read GD, NIST, and KHGNRAASS. Position 84 (glycine 84) interacts with anthranilate. Serine 96 lines the Mg(2+) pocket. Asparagine 115 provides a ligand contact to anthranilate. Arginine 170 serves as a coordination point for anthranilate. Mg(2+)-binding residues include aspartate 228 and glutamate 229.

It belongs to the anthranilate phosphoribosyltransferase family. In terms of assembly, homodimer. The cofactor is Mg(2+).

It catalyses the reaction N-(5-phospho-beta-D-ribosyl)anthranilate + diphosphate = 5-phospho-alpha-D-ribose 1-diphosphate + anthranilate. It functions in the pathway amino-acid biosynthesis; L-tryptophan biosynthesis; L-tryptophan from chorismate: step 2/5. In terms of biological role, catalyzes the transfer of the phosphoribosyl group of 5-phosphorylribose-1-pyrophosphate (PRPP) to anthranilate to yield N-(5'-phosphoribosyl)-anthranilate (PRA). This Leifsonia xyli subsp. xyli (strain CTCB07) protein is Anthranilate phosphoribosyltransferase.